A 70-amino-acid polypeptide reads, in one-letter code: MGKVRIFLPLTSLSIEITHPPTELIQSIIVDSLWGIRWYISLSFTTSTLKMLVRSTVSSICLLISSDIIF.

This is an uncharacterized protein from Vaccinia virus (strain Copenhagen) (VACV).